A 512-amino-acid polypeptide reads, in one-letter code: MENAGAGDGAPKHYPGKMTVFVFIACLVASSGGLIFGYDIGISGGVTSMDPFLSRFFPSVYAKEKEVVDTNQYCKFDSEPLTLFTSSLYLAALIASLFASVITRKLGRKMTMLGGGFIFLIGAVLNGAAVNVAMLIIGRILLGIGVGFSIQAVPLYLSEMAPAKMRGMLNIIFQLMITVGILFANLINYFTDKIAGGWGWRVSLGLAAVPAVIMTVGSILLPDTPNSLLSRGKENEARTMLRRIRGTEDIGPEYDDLVAASEATKAIENPWRTLLERRYRPQLVMSVLIPTLQQLTGINVVMFYAPVLFKTIGFGGTASLMSAVITGLVNMFATFVSIATVDRFGRRVLFIQGGIQMIIAQFILGTLIAVKFGTAGVANISQGYAIVVVLFICLFVSAFAWSWGPLGWLVPSEIFPLEIRSAAQSVVVVFNMAFTFFIAQIFLMMLCRLKFGLFFFFGAMELIMTGFVLVFLPETKGIPIEEMDRIWGEHWYWSRFVGAGRNRVMQMASTNV.

Over 1-17 (MENAGAGDGAPKHYPGK) the chain is Cytoplasmic. A helical transmembrane segment spans residues 18 to 38 (MTVFVFIACLVASSGGLIFGY). Residues 39 to 81 (DIGISGGVTSMDPFLSRFFPSVYAKEKEVVDTNQYCKFDSEPL) lie on the Extracellular side of the membrane. A helical membrane pass occupies residues 82–102 (TLFTSSLYLAALIASLFASVI). The Cytoplasmic segment spans residues 103–116 (TRKLGRKMTMLGGG). The chain crosses the membrane as a helical span at residues 117-137 (FIFLIGAVLNGAAVNVAMLII). At 138-139 (GR) the chain is on the extracellular side. A helical transmembrane segment spans residues 140-160 (ILLGIGVGFSIQAVPLYLSEM). The Cytoplasmic portion of the chain corresponds to 161–166 (APAKMR). Residues 167-187 (GMLNIIFQLMITVGILFANLI) form a helical membrane-spanning segment. Residues 188–201 (NYFTDKIAGGWGWR) lie on the Extracellular side of the membrane. Residues 202–222 (VSLGLAAVPAVIMTVGSILLP) form a helical membrane-spanning segment. The Cytoplasmic portion of the chain corresponds to 223 to 294 (DTPNSLLSRG…MSVLIPTLQQ (72 aa)). A helical membrane pass occupies residues 295–315 (LTGINVVMFYAPVLFKTIGFG). Over 316 to 320 (GTASL) the chain is Extracellular. The chain crosses the membrane as a helical span at residues 321-341 (MSAVITGLVNMFATFVSIATV). The Cytoplasmic portion of the chain corresponds to 342-347 (DRFGRR). The chain crosses the membrane as a helical span at residues 348-368 (VLFIQGGIQMIIAQFILGTLI). Residues 369–385 (AVKFGTAGVANISQGYA) lie on the Extracellular side of the membrane. Residues 386–406 (IVVVLFICLFVSAFAWSWGPL) form a helical membrane-spanning segment. The Cytoplasmic portion of the chain corresponds to 407–425 (GWLVPSEIFPLEIRSAAQS). A helical transmembrane segment spans residues 426-446 (VVVVFNMAFTFFIAQIFLMML). At 447–450 (CRLK) the chain is on the extracellular side. A helical membrane pass occupies residues 451 to 471 (FGLFFFFGAMELIMTGFVLVF). Over 472-512 (LPETKGIPIEEMDRIWGEHWYWSRFVGAGRNRVMQMASTNV) the chain is Cytoplasmic.

This sequence belongs to the major facilitator superfamily. Sugar transporter (TC 2.A.1.1) family.

It localises to the membrane. In terms of biological role, mediates active uptake of hexoses by sugar:proton symport. The chain is Sugar transport protein MST7 from Oryza sativa subsp. japonica (Rice).